We begin with the raw amino-acid sequence, 232 residues long: Putative N-acetylmannosamine-6-phosphate 2-epimerase (232 aa).

The protein belongs to the NanE family.

It carries out the reaction an N-acyl-D-glucosamine 6-phosphate = an N-acyl-D-mannosamine 6-phosphate. Its pathway is amino-sugar metabolism; N-acetylneuraminate degradation; D-fructose 6-phosphate from N-acetylneuraminate: step 3/5. In terms of biological role, converts N-acetylmannosamine-6-phosphate (ManNAc-6-P) to N-acetylglucosamine-6-phosphate (GlcNAc-6-P). The chain is Putative N-acetylmannosamine-6-phosphate 2-epimerase from Borreliella afzelii (strain PKo) (Borrelia afzelii).